A 393-amino-acid polypeptide reads, in one-letter code: NAD(P)H-quinone oxidoreductase subunit H, chloroplastic (393 aa).

The protein belongs to the complex I 49 kDa subunit family. NDH is composed of at least 16 different subunits, 5 of which are encoded in the nucleus.

It localises to the plastid. The protein resides in the chloroplast thylakoid membrane. It carries out the reaction a plastoquinone + NADH + (n+1) H(+)(in) = a plastoquinol + NAD(+) + n H(+)(out). It catalyses the reaction a plastoquinone + NADPH + (n+1) H(+)(in) = a plastoquinol + NADP(+) + n H(+)(out). In terms of biological role, NDH shuttles electrons from NAD(P)H:plastoquinone, via FMN and iron-sulfur (Fe-S) centers, to quinones in the photosynthetic chain and possibly in a chloroplast respiratory chain. The immediate electron acceptor for the enzyme in this species is believed to be plastoquinone. Couples the redox reaction to proton translocation, and thus conserves the redox energy in a proton gradient. The polypeptide is NAD(P)H-quinone oxidoreductase subunit H, chloroplastic (Amborella trichopoda).